Consider the following 250-residue polypeptide: 4-hydroxy-tetrahydrodipicolinate reductase (250 aa).

Residues 9–14, 79–81, and 103–106 contribute to the NAD(+) site; these read GATGKM, GTT, and SANM. Histidine 135 functions as the Proton donor/acceptor in the catalytic mechanism. Histidine 136 serves as a coordination point for (S)-2,3,4,5-tetrahydrodipicolinate. Residue lysine 139 is the Proton donor of the active site. A (S)-2,3,4,5-tetrahydrodipicolinate-binding site is contributed by 145 to 146; sequence GT.

This sequence belongs to the DapB family.

It localises to the cytoplasm. The enzyme catalyses (S)-2,3,4,5-tetrahydrodipicolinate + NAD(+) + H2O = (2S,4S)-4-hydroxy-2,3,4,5-tetrahydrodipicolinate + NADH + H(+). The catalysed reaction is (S)-2,3,4,5-tetrahydrodipicolinate + NADP(+) + H2O = (2S,4S)-4-hydroxy-2,3,4,5-tetrahydrodipicolinate + NADPH + H(+). Its pathway is amino-acid biosynthesis; L-lysine biosynthesis via DAP pathway; (S)-tetrahydrodipicolinate from L-aspartate: step 4/4. In terms of biological role, catalyzes the conversion of 4-hydroxy-tetrahydrodipicolinate (HTPA) to tetrahydrodipicolinate. In Rickettsia bellii (strain OSU 85-389), this protein is 4-hydroxy-tetrahydrodipicolinate reductase.